Consider the following 31-residue polypeptide: Nemertide alpha-4 (31 aa).

3 disulfide bridges follow: cysteine 2-cysteine 16, cysteine 9-cysteine 20, and cysteine 15-cysteine 26. Residues proline 28 and proline 29 each carry the 4-hydroxyproline modification.

It belongs to the nemertide family. As to expression, confined to the epidermis and to the mucus layer.

It is found in the secreted. Functionally, potent toxin, demonstrating strong inhibitory effects on insect sodium channels (Nav) and reduced activity on mammalian sodium channels. Potently inhibits inactivation of insect sodium channels of B.germanica (BgNav1) (EC(50)=11.1 nM). Also delays the inactivation of most mammalian Nav (human Nav1.1/SCN1A; EC(50)=92 nM, rat Nav1.2/SCN2A; EC(50)=134.2 nM, rat Nav1.3/SCN3A; EC(50)=12.9 nM, rat Nav1.4/SCN4A; EC(50)=14.6 nM, human Nav1.5/SCN5A; EC(50)=27.8 nM, mouse Nav1.6/SCN8A; EC(50)=123.6 nM, human Nav1.9/SCN9A; EC(50)=80.5 nM). Inactivation is completely prevented by a concentration of 1 uM, resulting in sustained, non-inactivating currents. In addition, the toxin significantly enhances the recovery from inactivation, and the open state is not required for the toxin to interact with the channel. In vivo, injection into brine shrimp (Artemia salina) stops movement or causes death after 24 hours (EC(50)=0.4 uM). This chain is Nemertide alpha-4, found in Lineus sanguineus (Ribbon worm).